A 373-amino-acid chain; its full sequence is MEFKLKHKDGMARVCEITTAHSTFLTPVFMPVGTVGAVKSLDANDMKNELDAKIILANTYHMYLRPTSKVVKDFGGLHGFTKFDRSFLTDSGGFQAFSLSKNSKHFNEGIEFKSHIDGSRHLFTPKSVLDAQYDFNSDIMMILDDLVALPATKERVKISVDRTILWAKEAITYHKNMQNKGIGIGQNIFGIIQGGTDYEERKRCALSLNEMPFDGLAIGGLSVGEENALMYETVQNLNPYLDENRPRYLMGVGTPEDLVENVERGVDMFDCVMPTRNARNGTFFTSFGKFNIKKAEFINDHEVIDPTCSCYTCRNFSRGYLNHLFKAKELTFFRLASLHNLHYYLELARKMREAILNNSFTQFKRNFYHLRGK.

The active-site Proton acceptor is the D90. Substrate is bound by residues 90-94 (DSGGF), D144, Q193, and G220. Residues 251–257 (GVGTPED) are RNA binding. The Nucleophile role is filled by D270. The RNA binding; important for wobble base 34 recognition stretch occupies residues 275–279 (TRNAR). Zn(2+)-binding residues include C308, C310, C313, and H339.

The protein belongs to the queuine tRNA-ribosyltransferase family. In terms of assembly, homodimer. Within each dimer, one monomer is responsible for RNA recognition and catalysis, while the other monomer binds to the replacement base PreQ1. It depends on Zn(2+) as a cofactor.

The enzyme catalyses 7-aminomethyl-7-carbaguanine + guanosine(34) in tRNA = 7-aminomethyl-7-carbaguanosine(34) in tRNA + guanine. It participates in tRNA modification; tRNA-queuosine biosynthesis. In terms of biological role, catalyzes the base-exchange of a guanine (G) residue with the queuine precursor 7-aminomethyl-7-deazaguanine (PreQ1) at position 34 (anticodon wobble position) in tRNAs with GU(N) anticodons (tRNA-Asp, -Asn, -His and -Tyr). Catalysis occurs through a double-displacement mechanism. The nucleophile active site attacks the C1' of nucleotide 34 to detach the guanine base from the RNA, forming a covalent enzyme-RNA intermediate. The proton acceptor active site deprotonates the incoming PreQ1, allowing a nucleophilic attack on the C1' of the ribose to form the product. After dissociation, two additional enzymatic reactions on the tRNA convert PreQ1 to queuine (Q), resulting in the hypermodified nucleoside queuosine (7-(((4,5-cis-dihydroxy-2-cyclopenten-1-yl)amino)methyl)-7-deazaguanosine). In Campylobacter jejuni (strain RM1221), this protein is Queuine tRNA-ribosyltransferase.